Reading from the N-terminus, the 720-residue chain is Engulfment and cell motility protein 3 (720 aa).

In terms of domain architecture, ELMO spans 307–479; it reads EQREQLQALR…VVREQLARTL (173 aa). A PH domain is found at 541-663; it reads LRLCEGMLFR…WTDGLSALLG (123 aa).

In terms of assembly, probably interacts directly with the SH3-domain of DOCK1 via its SH3-binding site. Part of a complex with DOCK1 and RAC1. Interacts with ADGRB3.

The protein localises to the cytoplasm. Functionally, involved in cytoskeletal rearrangements required for phagocytosis of apoptotic cells and cell motility. Acts in association with DOCK1 and CRK. Was initially proposed to be required in complex with DOCK1 to activate Rac Rho small GTPases. May enhance the guanine nucleotide exchange factor (GEF) activity of DOCK1. In Rattus norvegicus (Rat), this protein is Engulfment and cell motility protein 3 (Elmo3).